The primary structure comprises 314 residues: Ribosomal protein L11 methyltransferase (314 aa).

Residues Thr164, Gly185, Asp207, and Asn249 each coordinate S-adenosyl-L-methionine.

This sequence belongs to the methyltransferase superfamily. PrmA family.

The protein resides in the cytoplasm. The catalysed reaction is L-lysyl-[protein] + 3 S-adenosyl-L-methionine = N(6),N(6),N(6)-trimethyl-L-lysyl-[protein] + 3 S-adenosyl-L-homocysteine + 3 H(+). Its function is as follows. Methylates ribosomal protein L11. The protein is Ribosomal protein L11 methyltransferase of Clostridium beijerinckii (strain ATCC 51743 / NCIMB 8052) (Clostridium acetobutylicum).